We begin with the raw amino-acid sequence, 745 residues long: Phosphoribosylformylglycinamidine synthase subunit PurL (745 aa).

Residue histidine 50 is part of the active site. Residues tyrosine 53 and lysine 92 each coordinate ATP. Glutamate 94 is a Mg(2+) binding site. Substrate contacts are provided by residues 95-98 (SHNH) and arginine 117. Histidine 96 (proton acceptor) is an active-site residue. Mg(2+) is bound at residue aspartate 118. Residue glutamine 241 participates in substrate binding. Aspartate 269 serves as a coordination point for Mg(2+). A substrate-binding site is contributed by 313 to 315 (ESQ). Residues aspartate 495 and glycine 532 each coordinate ATP. Asparagine 533 contacts Mg(2+). Serine 535 is a substrate binding site.

It belongs to the FGAMS family. Monomer. Part of the FGAM synthase complex composed of 1 PurL, 1 PurQ and 2 PurS subunits.

It localises to the cytoplasm. It catalyses the reaction N(2)-formyl-N(1)-(5-phospho-beta-D-ribosyl)glycinamide + L-glutamine + ATP + H2O = 2-formamido-N(1)-(5-O-phospho-beta-D-ribosyl)acetamidine + L-glutamate + ADP + phosphate + H(+). It functions in the pathway purine metabolism; IMP biosynthesis via de novo pathway; 5-amino-1-(5-phospho-D-ribosyl)imidazole from N(2)-formyl-N(1)-(5-phospho-D-ribosyl)glycinamide: step 1/2. Its function is as follows. Part of the phosphoribosylformylglycinamidine synthase complex involved in the purines biosynthetic pathway. Catalyzes the ATP-dependent conversion of formylglycinamide ribonucleotide (FGAR) and glutamine to yield formylglycinamidine ribonucleotide (FGAM) and glutamate. The FGAM synthase complex is composed of three subunits. PurQ produces an ammonia molecule by converting glutamine to glutamate. PurL transfers the ammonia molecule to FGAR to form FGAM in an ATP-dependent manner. PurS interacts with PurQ and PurL and is thought to assist in the transfer of the ammonia molecule from PurQ to PurL. This Allorhizobium ampelinum (strain ATCC BAA-846 / DSM 112012 / S4) (Agrobacterium vitis (strain S4)) protein is Phosphoribosylformylglycinamidine synthase subunit PurL.